The sequence spans 211 residues: MGQKSNPIGLRLKIVGTWDSLWYANRDYATKLHEDLLLRSFVKKTFHHAAVSKVVIARKVDAVIINIHSARPGVIIGKKGVDIDRIKQKIAKMVNHEVELHIVEVKKPDLKAVLIAENIAQQLEKRVSFRRAMKRGVQNCLKMGAKGVKVSCAGRLGGAEIARTEWYKEGSVPLHTFRANIDYSCVEAKTIYGIVGVKVWVYVGDSRAVVE.

A KH type-2 domain is found at 38–106; that stretch reads LRSFVKKTFH…EVELHIVEVK (69 aa).

This sequence belongs to the universal ribosomal protein uS3 family. Part of the 30S ribosomal subunit. Forms a tight complex with proteins S10 and S14.

Functionally, binds the lower part of the 30S subunit head. Binds mRNA in the 70S ribosome, positioning it for translation. This Anaplasma phagocytophilum (strain HZ) protein is Small ribosomal subunit protein uS3.